The chain runs to 124 residues: Small ribosomal subunit protein uS12 (124 aa).

The segment at 1–32 (MPTISQLIRHGRQKQKKRTKSPALKSSPQRRG) is disordered. Residues 9–20 (RHGRQKQKKRTK) are compositionally biased toward basic residues. The residue at position 89 (aspartate 89) is a 3-methylthioaspartic acid.

The protein belongs to the universal ribosomal protein uS12 family. In terms of assembly, part of the 30S ribosomal subunit. Contacts proteins S8 and S17. May interact with IF1 in the 30S initiation complex.

Functionally, with S4 and S5 plays an important role in translational accuracy. Interacts with and stabilizes bases of the 16S rRNA that are involved in tRNA selection in the A site and with the mRNA backbone. Located at the interface of the 30S and 50S subunits, it traverses the body of the 30S subunit contacting proteins on the other side and probably holding the rRNA structure together. The combined cluster of proteins S8, S12 and S17 appears to hold together the shoulder and platform of the 30S subunit. The polypeptide is Small ribosomal subunit protein uS12 (Leptospira borgpetersenii serovar Hardjo-bovis (strain JB197)).